Consider the following 555-residue polypeptide: High-affinity gluconate transporter ght3 (555 aa).

The Cytoplasmic segment spans residues 1–9 (MNRFITSIL). The chain crosses the membrane as a helical span at residues 10–30 (VVFISMSGWLQGADTGSISGI). Residues 31–58 (LGMRDFQSRFADRYNPISNSYSYSAWRQ) are Extracellular-facing. Residues 59–79 (ALLTGTINAGCLFGAMLSSPF) form a helical membrane-spanning segment. Topologically, residues 80 to 87 (TERIGKKY) are cytoplasmic. Residues 88 to 108 (SICFFSGVYIIAELLLVTAVP) form a helical membrane-spanning segment. Topologically, residues 109–112 (SWIQ) are extracellular. Residues 113–133 (VLVGKILAGVGIGALSVLSPG) form a helical membrane-spanning segment. The Cytoplasmic segment spans residues 134 to 144 (YQSEVAPPQIR). Residues 145-165 (GAVVATYQIFSTGAALVAACI) form a helical membrane-spanning segment. The Extracellular portion of the chain corresponds to 166-179 (NMGTHKLRKTASWR). Residues 180-200 (TSFGINMLWGILLMVGVLFLP) form a helical membrane-spanning segment. At 201–266 (ESPRYLIYKG…IFGKDIRYRT (66 aa)) the chain is on the cytoplasmic side. A helical membrane pass occupies residues 267–285 (CLGFLVMLFRELIGNNYYF). Topologically, residues 286-301 (YYATQVFKGTGMTDIF) are extracellular. Residues 302 to 322 (LPAVILGAINFGTTFGALYTI) traverse the membrane as a helical segment. Over 323–328 (DNLGRR) the chain is Cytoplasmic. A helical transmembrane segment spans residues 329-349 (NPLIFGAAFQSICFFIYAAVG). Over 350-363 (DRKLIYKNGTSDHR) the chain is Extracellular. N-linked (GlcNAc...) asparagine glycosylation is present at Asn-357. A helical membrane pass occupies residues 364-384 (AGSVMIVFSCLFLFSYCCSWG). The Cytoplasmic segment spans residues 385–404 (PMGWVIVGETFPIRYRSKCA). A helical membrane pass occupies residues 405–425 (SVATSGNWLGNFMISFFTPFI). At 426–432 (NNAIGFK) the chain is on the extracellular side. Residues 433 to 453 (LGYIYACINLFSSFMIFFLAK) form a helical membrane-spanning segment. At 454–555 (ETKGLTLEEV…FSEDSHPTYI (102 aa)) the chain is on the cytoplasmic side. Residues 492 to 509 (KEEEKREREKSKGIRGQE) are compositionally biased toward basic and acidic residues. The tract at residues 492 to 555 (KEEEKREREK…FSEDSHPTYI (64 aa)) is disordered. A compositionally biased stretch (acidic residues) spans 510–521 (EEFIENADEDNN). Positions 522-534 (DSSSSSGSVVSAV) are enriched in low complexity. The segment covering 545-555 (RFSEDSHPTYI) has biased composition (basic and acidic residues).

Belongs to the major facilitator superfamily. Sugar transporter (TC 2.A.1.1) family.

It is found in the membrane. High-affinity gluconate transporter. The polypeptide is High-affinity gluconate transporter ght3 (ght3) (Schizosaccharomyces pombe (strain 972 / ATCC 24843) (Fission yeast)).